The sequence spans 335 residues: Holliday junction branch migration complex subunit RuvB (335 aa).

The tract at residues 1–181 is large ATPase domain (RuvB-L); sequence MDRIVEIEKY…FGMQFRLEFY (181 aa). An ATP-binding site is contributed by L20. ADP is bound by residues R21, Y28, I29, G62, L63, G64, K65, T66, and T67. ATP contacts are provided by residues 128–130 and R171; that span reads EDY. ADP contacts are provided by Y181 and R218. Positions 182 to 252 are small ATPAse domain (RuvB-S); the sequence is KDSELALILQ…RANEALNSLG (71 aa). Residues 255-335 form a head domain (RuvB-H) region; sequence ELGFDAMDLR…LNYEKTLFEE (81 aa). 2 residues coordinate DNA: R309 and R314.

This sequence belongs to the RuvB family. As to quaternary structure, homohexamer. Forms an RuvA(8)-RuvB(12)-Holliday junction (HJ) complex. HJ DNA is sandwiched between 2 RuvA tetramers; dsDNA enters through RuvA and exits via RuvB. An RuvB hexamer assembles on each DNA strand where it exits the tetramer. Each RuvB hexamer is contacted by two RuvA subunits (via domain III) on 2 adjacent RuvB subunits; this complex drives branch migration. In the full resolvosome a probable DNA-RuvA(4)-RuvB(12)-RuvC(2) complex forms which resolves the HJ.

It localises to the cytoplasm. It carries out the reaction ATP + H2O = ADP + phosphate + H(+). Functionally, the RuvA-RuvB-RuvC complex processes Holliday junction (HJ) DNA during genetic recombination and DNA repair, while the RuvA-RuvB complex plays an important role in the rescue of blocked DNA replication forks via replication fork reversal (RFR). RuvA specifically binds to HJ cruciform DNA, conferring on it an open structure. The RuvB hexamer acts as an ATP-dependent pump, pulling dsDNA into and through the RuvAB complex. RuvB forms 2 homohexamers on either side of HJ DNA bound by 1 or 2 RuvA tetramers; 4 subunits per hexamer contact DNA at a time. Coordinated motions by a converter formed by DNA-disengaged RuvB subunits stimulates ATP hydrolysis and nucleotide exchange. Immobilization of the converter enables RuvB to convert the ATP-contained energy into a lever motion, pulling 2 nucleotides of DNA out of the RuvA tetramer per ATP hydrolyzed, thus driving DNA branch migration. The RuvB motors rotate together with the DNA substrate, which together with the progressing nucleotide cycle form the mechanistic basis for DNA recombination by continuous HJ branch migration. Branch migration allows RuvC to scan DNA until it finds its consensus sequence, where it cleaves and resolves cruciform DNA. The chain is Holliday junction branch migration complex subunit RuvB from Campylobacter jejuni subsp. jejuni serotype O:2 (strain ATCC 700819 / NCTC 11168).